An 875-amino-acid polypeptide reads, in one-letter code: Protein HIR2 (875 aa).

WD repeat units lie at residues 10 to 47 (IHNE…DTAF), 118 to 158 (KSPS…KLSE), 163 to 201 (KASK…THKL), 237 to 277 (PNNA…PAFY), 278 to 316 (EKPN…PLFN), and 320 to 359 (VSST…LGVA). The disordered stretch occupies residues 398–473 (ESASAAPIPN…IAPGSKKQKK (76 aa)). The span at 424–446 (ANNQTNGIKTIQSTSMEFNTPSY) shows a compositional bias: polar residues. WD repeat units follow at residues 546 to 587 (LFQD…LMAP) and 589 to 626 (VLGV…LAFP). Position 713 is a phosphoserine (S713).

This sequence belongs to the WD repeat HIR1 family. Component of the HIR complex, composed of HIR1, HIR2, HIR3 and HPC2. This complex may consist of one copy of HIR1 and HIR3 and two copies of HIR2 and HPC2. The HIR complex interacts with ASF1. Interacts with SNF2. Interacts with SNF5. Interacts with SWI3. Interacts with RTT106.

The protein localises to the nucleus. The protein resides in the chromosome. Its function is as follows. Component of the HIR complex, which cooperates with ASF1 to promote replication-independent chromatin assembly. The HIR complex is also required for the periodic repression of three of the four histone gene loci during the cell cycle as well as for autogenous regulation of the HTA1-HTB1 locus by H2A and H2B. DNA-binding by the HIR complex may repress transcription by inhibiting nucleosome remodeling by the SWI/SNF complex. The HIR complex may also be required for transcriptional silencing of centromeric, telomeric and mating-type loci in the absence of CAF-1. The polypeptide is Protein HIR2 (HIR2) (Saccharomyces cerevisiae (strain ATCC 204508 / S288c) (Baker's yeast)).